Here is a 92-residue protein sequence, read N- to C-terminus: Small ribosomal subunit protein uS19 (92 aa).

It belongs to the universal ribosomal protein uS19 family.

In terms of biological role, protein S19 forms a complex with S13 that binds strongly to the 16S ribosomal RNA. This Borrelia duttonii (strain Ly) protein is Small ribosomal subunit protein uS19.